The sequence spans 159 residues: uncharacterized protein (159 aa).

The 139-residue stretch at methionine 1–proline 139 folds into the N-acetyltransferase domain.

This is an uncharacterized protein from Bacillus subtilis (strain 168).